Here is a 904-residue protein sequence, read N- to C-terminus: E3 ubiquitin-protein ligase HACE1 (904 aa).

ANK repeat units follow at residues 34–63 (AVYT…DVNY), 68–97 (VKRS…NPNY), 101–130 (SGCT…DVNI), 134–163 (EGLT…NVDV), 167–196 (MGQT…DINR), 200–230 (SGAT…YLPD), and 232–261 (NGVT…RLFQ). An HECT domain is found at 569–904 (SNEKLKQGIA…HCGSYGYTMA (336 aa)). The active-site Glycyl thioester intermediate is Cys871.

Its subcellular location is the golgi apparatus. The protein resides in the golgi stack membrane. The protein localises to the cytoplasm. It localises to the endoplasmic reticulum. It carries out the reaction S-ubiquitinyl-[E2 ubiquitin-conjugating enzyme]-L-cysteine + [acceptor protein]-L-lysine = [E2 ubiquitin-conjugating enzyme]-L-cysteine + N(6)-ubiquitinyl-[acceptor protein]-L-lysine.. The protein operates within protein modification; protein ubiquitination. Its function is as follows. E3 ubiquitin-protein ligase involved in Golgi membrane fusion and regulation of small GTPases. Acts as a regulator of Golgi membrane dynamics during the cell cycle: recruited to Golgi membrane by Rab proteins and regulates postmitotic Golgi membrane fusion. Acts by mediating ubiquitination during mitotic Golgi disassembly, ubiquitination serving as a signal for Golgi reassembly later, after cell division. The polypeptide is E3 ubiquitin-protein ligase HACE1 (hace1) (Danio rerio (Zebrafish)).